A 179-amino-acid chain; its full sequence is Large ribosomal subunit protein uL6 (179 aa).

The protein belongs to the universal ribosomal protein uL6 family. In terms of assembly, part of the 50S ribosomal subunit.

Functionally, this protein binds to the 23S rRNA, and is important in its secondary structure. It is located near the subunit interface in the base of the L7/L12 stalk, and near the tRNA binding site of the peptidyltransferase center. The protein is Large ribosomal subunit protein uL6 of Synechococcus sp. (strain WH7803).